A 172-amino-acid polypeptide reads, in one-letter code: NADH-ubiquinone oxidoreductase chain 6 (172 aa).

Helical transmembrane passes span 1 to 21, 38 to 58, 86 to 106, and 147 to 167; these read MNNY…GLAL, VGCL…VFLI, WLIL…ICVL, and CATW…FIII.

The protein belongs to the complex I subunit 6 family. Core subunit of respiratory chain NADH dehydrogenase (Complex I) which is composed of 45 different subunits.

The protein localises to the mitochondrion inner membrane. It carries out the reaction a ubiquinone + NADH + 5 H(+)(in) = a ubiquinol + NAD(+) + 4 H(+)(out). Its function is as follows. Core subunit of the mitochondrial membrane respiratory chain NADH dehydrogenase (Complex I) which catalyzes electron transfer from NADH through the respiratory chain, using ubiquinone as an electron acceptor. Essential for the catalytic activity and assembly of complex I. In Mus musculus (Mouse), this protein is NADH-ubiquinone oxidoreductase chain 6 (Mtnd6).